Reading from the N-terminus, the 385-residue chain is ATP phosphoribosyltransferase regulatory subunit (385 aa).

It belongs to the class-II aminoacyl-tRNA synthetase family. HisZ subfamily. Heteromultimer composed of HisG and HisZ subunits.

It localises to the cytoplasm. Its pathway is amino-acid biosynthesis; L-histidine biosynthesis; L-histidine from 5-phospho-alpha-D-ribose 1-diphosphate: step 1/9. Its function is as follows. Required for the first step of histidine biosynthesis. May allow the feedback regulation of ATP phosphoribosyltransferase activity by histidine. The protein is ATP phosphoribosyltransferase regulatory subunit of Bordetella avium (strain 197N).